The chain runs to 1173 residues: Pumilio homolog 2 (1173 aa).

5 disordered regions span residues 41–68 (VSSA…PLSG), 265–296 (VSKL…ASPT), 480–518 (QQAA…ESLA), 592–662 (LTGA…SLGF), and 730–759 (PISM…SSSL). The span at 287-296 (TPGSRQASPT) shows a compositional bias: polar residues. Over residues 480–492 (QQAATQASQGQQQ) the composition is skewed to low complexity. Positions 493 to 518 (VMRATSNQRPLTPNQAQQGQQPESLA) are enriched in polar residues. Low complexity predominate over residues 606 to 622 (QQQQQQQQQQHQQQQQQ). Residues 623–633 (PNANLHSNSFY) are compositionally biased toward polar residues. The span at 634–657 (GNSTMSNNSQSSSLFSPGPGQPGS) shows a compositional bias: low complexity. The region spanning 815 to 1155 (GRSRLLEDFR…HILAKLEKYY (341 aa)) is the PUM-HD domain. Pumilio repeat units lie at residues 835–870 (DLMG…LVFS), 871–906 (EILQ…ALAT), 907–942 (RIRG…EMVR), 943–978 (ELDG…FIIE), 979–1014 (AFKG…PILE), 1015–1050 (ELHQ…KIVC), 1051–1086 (EVRG…FLID), 1087–1129 (EICC…IIMH), and 1130–1167 (KIRP…LLVG). An adenine-nucleotide binding in RNA target region spans residues 850-854 (SRFIQ). The interval 886–890 (NYVIQ) is uracil-nucleotide binding in RNA target. Residues 922–926 (CRVIQ) are adenine-nucleotide binding in RNA target. The segment at 958-962 (NHVVQ) is non-specific-nucleotide binding in RNA target. Positions 994–998 (CRVIQ) are adenine-nucleotide binding in RNA target. A uracil-nucleotide binding in RNA target region spans residues 1030-1034 (NYVIQ). Positions 1066–1070 (SNVVE) are guanine-nucleotide binding in RNA target. Residues 1109-1113 (NYVVQ) form a uracil-nucleotide binding in RNA target region.

In terms of assembly, component of a complex with papd4, sympk, tacc3, parn, dazl and cpeb1. Post-translationally, phosphorylated.

It is found in the cytoplasm. It localises to the P-body. The protein localises to the cytoplasmic granule. Sequence-specific RNA-binding protein that acts as a post-transcriptional repressor by binding the 3'-UTR of mRNA targets. Binds to an RNA consensus sequence, the Pumilio Response Element (PRE), 5'-UGUANAUA-3', that is related to the Nanos Response Element (NRE). Mediates post-transcriptional repression of transcripts via different mechanisms: acts via direct recruitment of deadenylase complexes leading to translational inhibition and mRNA degradation. Also mediates deadenylation-independent repression by promoting accessibility of miRNAs. This Xenopus laevis (African clawed frog) protein is Pumilio homolog 2 (pum2).